The following is a 529-amino-acid chain: Interleukin-21 receptor (529 aa).

An N-terminal signal peptide occupies residues 1-19 (MPRGPVAALLLLILHGAWS). 3 cysteine pairs are disulfide-bonded: Cys20–Cys109, Cys25–Cys35, and Cys65–Cys81. Residues 20–237 (CLDLTCYTDY…GEPEAGWDPH (218 aa)) are Extracellular-facing. Fibronectin type-III domains follow at residues 21–118 (LDLT…AESI) and 119–228 (KPAP…TQAG). N-linked (GlcNAc...) asparagine glycans are attached at residues Asn73, Asn97, Asn104, Asn125, and Asn182. C-linked (Man) tryptophan glycosylation is present at Trp214. The WSXWS motif motif lies at 214–218 (WSEWS). The helical transmembrane segment at 238-258 (MLLLLAVLIIVLVFMGLKIHL) threads the bilayer. The Cytoplasmic segment spans residues 259–529 (PWRLWKKIWA…PPVDSGAQSS (271 aa)). The short motif at 266-274 (IWAPVPTPE) is the Box 1 motif element. The disordered stretch occupies residues 458-529 (TADPTWRTGS…PPVDSGAQSS (72 aa)).

This sequence belongs to the type I cytokine receptor family. Type 4 subfamily. In terms of assembly, heterodimer with the common gamma subunit. Associates with JAK1. Post-translationally, C-mannosylated at Trp-214 in the WSXWS motif, the sugar chain makes extensive hydrogen bonds with Asn-73 sugar, and bridges the two fibronectin domains transforming the V-shaped receptor into an A-frame. As to expression, selectively expressed in lymphoid tissues. Most highly expressed in thymus and spleen.

It localises to the membrane. In terms of biological role, this is a receptor for interleukin-21. This Mus musculus (Mouse) protein is Interleukin-21 receptor (Il21r).